Reading from the N-terminus, the 362-residue chain is Spermidine/putrescine import ATP-binding protein PotA (362 aa).

Residues 4–235 (IKLDHITKQY…PVNDFVARFI (232 aa)) enclose the ABC transporter domain. Residue 37–44 (GPSGSGKT) participates in ATP binding.

This sequence belongs to the ABC transporter superfamily. Spermidine/putrescine importer (TC 3.A.1.11.1) family. The complex is composed of two ATP-binding proteins (PotA), two transmembrane proteins (PotB and PotC) and a solute-binding protein (PotD).

The protein resides in the cell membrane. It carries out the reaction ATP + H2O + polyamine-[polyamine-binding protein]Side 1 = ADP + phosphate + polyamineSide 2 + [polyamine-binding protein]Side 1.. Its function is as follows. Part of the ABC transporter complex PotABCD involved in spermidine/putrescine import. Responsible for energy coupling to the transport system. The sequence is that of Spermidine/putrescine import ATP-binding protein PotA from Lactobacillus delbrueckii subsp. bulgaricus (strain ATCC BAA-365 / Lb-18).